Here is a 251-residue protein sequence, read N- to C-terminus: MNKKKNTILIGLYFLVGIMLFPDRIYAMHIAEGFLPVKWAGIWWIAMLPFLALGIKKVKSITQKEGPGIKMLLALAGAFVFVLSSLKLPSLTGSCSHPTGVGLGAILFGPWPMVVLGCIVLIFQAVLLAHGGLTTLGANVFSMAIVGPFVAYGAYRLLKKLNAPNWLSVFTGSALGNLLTYITTATQLAWAFPGKTGFIASLIKFMGVFATTQVPLAVTEGLVTVLIFNLLLEYSEGELKELSVISKGETV.

A signal peptide spans 1–27 (MNKKKNTILIGLYFLVGIMLFPDRIYA). 6 helical membrane passes run 35-55 (LPVK…ALGI), 66-86 (GPGI…LSSL), 103-123 (LGAI…VLIF), 131-151 (GGLT…PFVA), 166-186 (WLSV…TTAT), and 208-228 (VFAT…VLIF).

This sequence belongs to the CbiM family. Forms an energy-coupling factor (ECF) transporter complex composed of an ATP-binding protein (A component, CbiO), a transmembrane protein (T component, CbiQ) and 2 possible substrate-capture proteins (S components, CbiM and CbiN) of unknown stoichimetry.

The protein localises to the cell membrane. The protein operates within cofactor biosynthesis; adenosylcobalamin biosynthesis. In terms of biological role, part of the energy-coupling factor (ECF) transporter complex CbiMNOQ involved in cobalt import. The chain is Cobalt transport protein CbiM from Acetohalobium arabaticum (strain ATCC 49924 / DSM 5501 / Z-7288).